Reading from the N-terminus, the 334-residue chain is Probable tRNA pseudouridine synthase B (334 aa).

Asp82 (nucleophile) is an active-site residue. Residues 250–325 (LPKIWIKDSA…IAVDVEKVFM (76 aa)) form the PUA domain.

This sequence belongs to the pseudouridine synthase TruB family. Type 2 subfamily.

The catalysed reaction is uridine(55) in tRNA = pseudouridine(55) in tRNA. In terms of biological role, could be responsible for synthesis of pseudouridine from uracil-55 in the psi GC loop of transfer RNAs. The chain is Probable tRNA pseudouridine synthase B from Pyrococcus abyssi (strain GE5 / Orsay).